The chain runs to 368 residues: MSTEPSVAKDAVLKRSEALAENTPQVSGYDFNEGLDYSKLFESYVNTGFQATNLGLAIREINRMLDCRDQPLEADQIDSHETDDFIRRRSKCTVFLGYTSNLVSSGLRETIRFLAEHRMIDCIVTTAGGVEEDFIKCLAPTFMGSFELSGRDLRERGINRIGNLLVPNDNYCKFEDWVMPLLDEMLEEQKSQGTIWSPSKIIHRLGERIGDPSSIYYWAAKNQIPVFCPALTDGSLGDMMYFHSFRQPGLVVDILSDLRRLNTMAVKAVNSGMIIVGGGVIKHHICNANLMRNGADYSVFINTASEFDGSDSGARPDEAISWGKIRKDATPVKVYAEASLVFPLIVGETFAKRHHCAGKELPRETNQV.

NAD(+) contacts are provided by residues 100-104 (SNLVS), 126-128 (TAG), glutamate 132, and aspartate 233. 131 to 132 (EE) is a binding site for spermidine. Aspartate 238 contacts spermidine. Position 278 (glycine 278) interacts with NAD(+). Spermidine is bound at residue histidine 283. 303 to 304 (TA) contributes to the NAD(+) binding site. Residues 309-311 (GSD) and 318-324 (EAISWGK) each bind spermidine. Lysine 324 functions as the Nucleophile in the catalytic mechanism. Residue 337–338 (EA) participates in NAD(+) binding.

The protein belongs to the deoxyhypusine synthase family. NAD(+) serves as cofactor.

The enzyme catalyses [eIF5A protein]-L-lysine + spermidine = [eIF5A protein]-deoxyhypusine + propane-1,3-diamine. The protein operates within protein modification; eIF5A hypusination. Catalyzes the NAD-dependent oxidative cleavage of spermidine and the subsequent transfer of the butylamine moiety of spermidine to the epsilon-amino group of a specific lysine residue of the eIF-5A precursor protein to form the intermediate deoxyhypusine residue. This is Probable deoxyhypusine synthase from Drosophila melanogaster (Fruit fly).